Here is a 358-residue protein sequence, read N- to C-terminus: Chorismate synthase (358 aa).

Arg-48 is a binding site for NADP(+). FMN contacts are provided by residues 125–127 (RAS), Ser-277, 292–296 (KPIPS), and Arg-318.

The protein belongs to the chorismate synthase family. As to quaternary structure, homotetramer. Requires FMNH2 as cofactor.

The catalysed reaction is 5-O-(1-carboxyvinyl)-3-phosphoshikimate = chorismate + phosphate. The protein operates within metabolic intermediate biosynthesis; chorismate biosynthesis; chorismate from D-erythrose 4-phosphate and phosphoenolpyruvate: step 7/7. Functionally, catalyzes the anti-1,4-elimination of the C-3 phosphate and the C-6 proR hydrogen from 5-enolpyruvylshikimate-3-phosphate (EPSP) to yield chorismate, which is the branch point compound that serves as the starting substrate for the three terminal pathways of aromatic amino acid biosynthesis. This reaction introduces a second double bond into the aromatic ring system. The polypeptide is Chorismate synthase (Desulfatibacillum aliphaticivorans).